The chain runs to 267 residues: MTKYNWDERHIITFPEKKLALETKDLHVYYGQKEAINGIDMQFEKNKITALIGPSGCGKSTFLRSLNRMNDTIDVAKVTGQILYEGVDVNASNINVYEMRKHIGMVFQRPNPFAKSIYKNITFAHECNGVKDKQTLDEIVETSLKQAGLWEQVKDDLHKSAFTLSGGQQQRLCIARAIAVKPQILLMDEPAASLDPVATMQLEETMFELKEDYSIIIVTHNMQQAARASDYTAFFYLGDLIEYDETKKIFQDAALQSTSDYVSGRFG.

The 242-residue stretch at 21–262 (LETKDLHVYY…AALQSTSDYV (242 aa)) folds into the ABC transporter domain. 53-60 (GPSGCGKS) is an ATP binding site.

It belongs to the ABC transporter superfamily. Phosphate importer (TC 3.A.1.7) family. The complex is composed of two ATP-binding proteins (PstB), two transmembrane proteins (PstC and PstA) and a solute-binding protein (PstS).

Its subcellular location is the cell membrane. It carries out the reaction phosphate(out) + ATP + H2O = ADP + 2 phosphate(in) + H(+). Functionally, part of the ABC transporter complex PstSACB involved in phosphate import. Responsible for energy coupling to the transport system. In Streptococcus thermophilus (strain CNRZ 1066), this protein is Phosphate import ATP-binding protein PstB 1.